The sequence spans 138 residues: Large ribosomal subunit protein uL16 (138 aa).

Residues 1 to 17 (MLIPRKVKHRKQHHPRQ) show a composition bias toward basic residues. Residues 1–23 (MLIPRKVKHRKQHHPRQRGIASG) form a disordered region.

Belongs to the universal ribosomal protein uL16 family. As to quaternary structure, part of the 50S ribosomal subunit.

Binds 23S rRNA and is also seen to make contacts with the A and possibly P site tRNAs. The protein is Large ribosomal subunit protein uL16 of Mycobacterium sp. (strain JLS).